The primary structure comprises 232 residues: Heptaprenylglyceryl phosphate synthase (232 aa).

Lys12 lines the sn-glycerol 1-phosphate pocket. Positions 14 and 40 each coordinate Mg(2+). Residues 159-164 (YLEYSG), Gly189, and 209-210 (GN) each bind sn-glycerol 1-phosphate.

This sequence belongs to the GGGP/HepGP synthase family. Group I subfamily. Homodimer. The cofactor is Mg(2+).

The enzyme catalyses sn-glycerol 1-phosphate + all-trans-heptaprenyl diphosphate = 3-heptaprenyl-sn-glycero-1-phosphate + diphosphate. It functions in the pathway membrane lipid metabolism; glycerophospholipid metabolism. In terms of biological role, prenyltransferase that catalyzes in vivo the transfer of the heptaprenyl moiety of heptaprenyl pyrophosphate (HepPP; 35 carbon atoms) to the C3 hydroxyl of sn-glycerol-1-phosphate (G1P), producing heptaprenylglyceryl phosphate (HepGP). This reaction is an ether-bond-formation step in the biosynthesis of archaea-type G1P-based membrane lipids found in Bacillales. This is Heptaprenylglyceryl phosphate synthase from Shouchella clausii (strain KSM-K16) (Alkalihalobacillus clausii).